The sequence spans 235 residues: Uridylate kinase (235 aa).

9 to 12 (KLSG) is a binding site for ATP. Position 51 (glycine 51) interacts with UMP. Positions 52 and 56 each coordinate ATP. Residues aspartate 71 and 132-139 (TGNPYFTT) each bind UMP. ATP-binding residues include threonine 159, tyrosine 165, and aspartate 168.

This sequence belongs to the UMP kinase family. In terms of assembly, homohexamer.

It localises to the cytoplasm. The catalysed reaction is UMP + ATP = UDP + ADP. It participates in pyrimidine metabolism; CTP biosynthesis via de novo pathway; UDP from UMP (UMPK route): step 1/1. Its activity is regulated as follows. Inhibited by UTP. In terms of biological role, catalyzes the reversible phosphorylation of UMP to UDP. This chain is Uridylate kinase, found in Christiangramia forsetii (strain DSM 17595 / CGMCC 1.15422 / KT0803) (Gramella forsetii).